We begin with the raw amino-acid sequence, 316 residues long: MANLKEIRDRIKSVKNTRKITEAMRLVAAAKVRRAQEQVLRSRPFADRLARLLENLQARMRFEDADAPLLEDRPLETVTLMAVTGDRGLCGGYNANIIKRTEQRFEELQSKGYKVNLVLIGRKAISYFTNRSYPIQATFTGLEQVPTADEAGSVANEVFAEFLSETTDRVEIIFTKFINLVSCKPVVQTLLPLDPQGIADADDEIFRLTTKDGDLRVETGSAPANAQPELSSEIVFEQSPDQLLNALLPLYLQNQVLRSLQEAAASELASRMTAMNNASDNAKALAKTLTLDYNKARQAAITQEILEVAGGAAAVG.

The protein belongs to the ATPase gamma chain family. As to quaternary structure, F-type ATPases have 2 components, CF(1) - the catalytic core - and CF(0) - the membrane proton channel. CF(1) has five subunits: alpha(3), beta(3), gamma(1), delta(1), epsilon(1). CF(0) has three main subunits: a, b and c.

It is found in the cellular thylakoid membrane. Functionally, produces ATP from ADP in the presence of a proton gradient across the membrane. The gamma chain is believed to be important in regulating ATPase activity and the flow of protons through the CF(0) complex. The protein is ATP synthase gamma chain of Synechococcus sp. (strain WH7803).